We begin with the raw amino-acid sequence, 96 residues long: Ferredoxin (96 aa).

The 2Fe-2S ferredoxin-type domain maps to 4-94 (YKVKLLTPEG…DVVIETHKEE (91 aa)). [2Fe-2S] cluster contacts are provided by Cys-40, Cys-45, Cys-48, and Cys-78.

This sequence belongs to the 2Fe2S plant-type ferredoxin family. Requires [2Fe-2S] cluster as cofactor.

The protein resides in the plastid. Its subcellular location is the chloroplast. Functionally, ferredoxins are iron-sulfur proteins that transfer electrons in a wide variety of metabolic reactions. The polypeptide is Ferredoxin (Panax ginseng (Korean ginseng)).